The sequence spans 361 residues: 3-dehydroquinate synthase (361 aa).

Residues 72 to 77, 130 to 131, K142, and K151 each bind NAD(+); these read SGEKEK and TT. Residues E184, H247, and H264 each coordinate Zn(2+).

The protein belongs to the sugar phosphate cyclases superfamily. Dehydroquinate synthase family. Requires Co(2+) as cofactor. Zn(2+) is required as a cofactor. It depends on NAD(+) as a cofactor.

It localises to the cytoplasm. It catalyses the reaction 7-phospho-2-dehydro-3-deoxy-D-arabino-heptonate = 3-dehydroquinate + phosphate. It participates in metabolic intermediate biosynthesis; chorismate biosynthesis; chorismate from D-erythrose 4-phosphate and phosphoenolpyruvate: step 2/7. Its function is as follows. Catalyzes the conversion of 3-deoxy-D-arabino-heptulosonate 7-phosphate (DAHP) to dehydroquinate (DHQ). In Bacillus cereus (strain AH820), this protein is 3-dehydroquinate synthase.